The sequence spans 364 residues: DNA replication and repair protein RecF (364 aa).

30 to 37 is an ATP binding site; the sequence is GNNGQGKT.

Belongs to the RecF family.

It is found in the cytoplasm. Functionally, the RecF protein is involved in DNA metabolism; it is required for DNA replication and normal SOS inducibility. RecF binds preferentially to single-stranded, linear DNA. It also seems to bind ATP. The chain is DNA replication and repair protein RecF from Citrifermentans bemidjiense (strain ATCC BAA-1014 / DSM 16622 / JCM 12645 / Bem) (Geobacter bemidjiensis).